Consider the following 664-residue polypeptide: Alpha-1,4-glucan:maltose-1-phosphate maltosyltransferase (664 aa).

Residues Lys261, Gln321, and Asp356 each contribute to the alpha-maltose 1-phosphate site. Asp393 functions as the Nucleophile in the catalytic mechanism. Asn394 provides a ligand contact to alpha-maltose 1-phosphate. The Proton donor role is filled by Glu422. 533 to 534 (KY) provides a ligand contact to alpha-maltose 1-phosphate.

This sequence belongs to the glycosyl hydrolase 13 family. GlgE subfamily. As to quaternary structure, homodimer.

It carries out the reaction alpha-maltose 1-phosphate + [(1-&gt;4)-alpha-D-glucosyl](n) = [(1-&gt;4)-alpha-D-glucosyl](n+2) + phosphate. Maltosyltransferase that uses maltose 1-phosphate (M1P) as the sugar donor to elongate linear or branched alpha-(1-&gt;4)-glucans. Is involved in a branched alpha-glucan biosynthetic pathway from trehalose, together with TreS, Mak and GlgB. The polypeptide is Alpha-1,4-glucan:maltose-1-phosphate maltosyltransferase (Pseudomonas aeruginosa (strain ATCC 15692 / DSM 22644 / CIP 104116 / JCM 14847 / LMG 12228 / 1C / PRS 101 / PAO1)).